Here is a 580-residue protein sequence, read N- to C-terminus: Peptidyl-prolyl cis-trans isomerase-like 2 (580 aa).

In terms of domain architecture, U-box spans 42–115; that stretch reads KRLPFRFCSL…GEYIDPVTYK (74 aa). Disordered stretches follow at residues 182–201, 227–259, 439–459, 479–530, and 553–580; these read IKEG…EDPS, QERA…SYQS, SPTL…RPTP, QKKQ…SSTT, and FVDE…SSWD. The PPIase cyclophilin-type domain maps to 309–468; it reads QKGYARISTT…PDIRIVDVTI (160 aa). The span at 439–457 shows a compositional bias: polar residues; sequence SPTLNKLETHPVNPTTNRP. Residues 490 to 507 are compositionally biased toward basic and acidic residues; that stretch reads EANRTAENDEEGSRRAED.

This sequence belongs to the cyclophilin-type PPIase family. PPIL2 subfamily.

It is found in the nucleus. It catalyses the reaction [protein]-peptidylproline (omega=180) = [protein]-peptidylproline (omega=0). It carries out the reaction S-ubiquitinyl-[E2 ubiquitin-conjugating enzyme]-L-cysteine + [acceptor protein]-L-lysine = [E2 ubiquitin-conjugating enzyme]-L-cysteine + N(6)-ubiquitinyl-[acceptor protein]-L-lysine.. Its pathway is protein modification; protein ubiquitination. In terms of biological role, may catalyze the cis-trans isomerization of proline imidic peptide bonds in oligopeptides thereby assisting the folding of proteins. May also function as a chaperone, playing a role in intracellular transport of proteins. May also have a protein ubiquitin ligase activity acting as an E3 ubiquitin protein ligase or as a ubiquitin-ubiquitin ligase promoting elongation of ubiquitin chains on proteins. The protein is Peptidyl-prolyl cis-trans isomerase-like 2 (cyp8) of Emericella nidulans (strain FGSC A4 / ATCC 38163 / CBS 112.46 / NRRL 194 / M139) (Aspergillus nidulans).